The sequence spans 71 residues: Exodeoxyribonuclease 7 small subunit (71 aa).

This sequence belongs to the XseB family. As to quaternary structure, heterooligomer composed of large and small subunits.

Its subcellular location is the cytoplasm. It catalyses the reaction Exonucleolytic cleavage in either 5'- to 3'- or 3'- to 5'-direction to yield nucleoside 5'-phosphates.. In terms of biological role, bidirectionally degrades single-stranded DNA into large acid-insoluble oligonucleotides, which are then degraded further into small acid-soluble oligonucleotides. In Streptococcus equi subsp. equi (strain 4047), this protein is Exodeoxyribonuclease 7 small subunit.